Consider the following 709-residue polypeptide: Acyl-coenzyme A oxidase 4 (709 aa).

Positions 1–12 are enriched in polar residues; the sequence is MTFTKKNVSVSQ. The interval 1-29 is disordered; sequence MTFTKKNVSVSQGPDPRSSIQKERDSSKW.

This sequence belongs to the acyl-CoA oxidase family. In terms of assembly, homooctamer. FAD serves as cofactor.

The protein localises to the peroxisome. The enzyme catalyses a 2,3-saturated acyl-CoA + O2 = a (2E)-enoyl-CoA + H2O2. Its pathway is lipid metabolism; peroxisomal fatty acid beta-oxidation. The chain is Acyl-coenzyme A oxidase 4 (POX4) from Candida tropicalis (Yeast).